Reading from the N-terminus, the 664-residue chain is MAGLGGSQIPDGEFTAVVYRLIRDARYAEAVQLLGGELQRSPRSRAGLSLLGYCYYRLQEFALAAECYEQLGQLHPELEQYRLYQAQALYKACLYPEATRVSLLLLDNPAYHNRVLRLQAAIKYSEADLPGARSLVEQLLSEGGEDSGGENELDGQVNLGCLLYKEGHYEAACSKFSAALQASGYRPDLSYNLALAYYSSRHYALALKHIADIIEHGIRQHPELGVGMTTVGIDVRSVGNTVVLHQTALVEAFNLRAAIEYQLRNYEAAQEALTDMPPRAEEELDPVTLHNQALMNMDARPTEGFEKLQFLLQQIPFPPETFGNLLLLYCEYEYFDLAADVLAENAHLTYEFLTPYLYDFLDAMVTCQTAPEEAFIKLDGLAGMLTEQLRKLTIQVQEARHNKDDEAVKKAVNEYEDTLEKYIPVLMAQAKIYWNLENYPMVEKLFRKSVEFCNDHHVWKLNVAHVLFMQENKYKEAIGFYEPIVKKHYDNILNVSAIVLANLCVSYIMISQNEEAEELMRKIGKEEEQLSYDDPDKKIYHLCIVNLVIGTLYCAKGNYDFGISRVIKSLEPCNKKLGTDTWYYAKRCFLSLLENMSKHTIMLRDSVIQECVQFLEHCELYGRDIPAVIEETLEEERMHIGKNTVTYESRELKALIYEIIGWNM.

TPR repeat units lie at residues 11–44, 45–78, 153–186, 188–220, 385–418, 423–456, and 458–491; these read DGEF…SPRS, RAGL…HPEL, LDGQ…SGYR, DLSY…GIRQ, LTEQ…YEDT, IPVL…CNDH, and VWKL…HYDN. The stretch at 509–532 forms a coiled coil; sequence MISQNEEAEELMRKIGKEEEQLSY. A TPR 8 repeat occupies 543 to 576; sequence CIVNLVIGTLYCAKGNYDFGISRVIKSLEPCNKK.

It belongs to the TTC30/dfy-1/fleer family. As to quaternary structure, interacts with the IFT B complex components IFT27, IFT46, IFT74, IFT52, IFT57, IFT80, IFT81 and IFT88. Interacts with KIF17.

It is found in the cell projection. The protein resides in the cilium. Required for polyglutamylation of axonemal tubulin. Plays a role in anterograde intraflagellar transport (IFT), the process by which cilia precursors are transported from the base of the cilium to the site of their incorporation at the tip. The polypeptide is Intraflagellar transport protein 70B (IFT70B) (Bos taurus (Bovine)).